The primary structure comprises 146 residues: Microsomal glutathione S-transferase 2 (146 aa).

3 consecutive transmembrane segments (helical) span residues 6 to 26 (ILLA…AMQV), 59 to 79 (FYPI…QVFA), and 111 to 131 (SLGV…NSFL).

The protein belongs to the MAPEG family. Homotrimer.

Its subcellular location is the endoplasmic reticulum membrane. The protein resides in the microsome membrane. The catalysed reaction is RX + glutathione = an S-substituted glutathione + a halide anion + H(+). It carries out the reaction 1-chloro-2,4-dinitrobenzene + glutathione = 2,4-dinitrophenyl-S-glutathione + chloride + H(+). It catalyses the reaction leukotriene C4 = leukotriene A4 + glutathione. The enzyme catalyses (5S)-hydroperoxy-(6E,8Z,11Z,14Z)-eicosatetraenoate + 2 glutathione = (5S)-hydroxy-(6E,8Z,11Z,14Z)-eicosatetraenoate + glutathione disulfide + H2O. Its activity is regulated as follows. Each monomer binds on GSH molecule but only one subunit is catalytically active. Its function is as follows. Catalyzes several different glutathione-dependent reactions. Catalyzes the glutathione-dependent reduction of lipid hydroperoxides, such as 5-HPETE. Has glutathione transferase activity, toward xenobiotic electrophiles, such as 1-chloro-2, 4-dinitrobenzene (CDNB). Also catalyzes the conjugation of leukotriene A4 with reduced glutathione to form leukotriene C4 (LTC4). Involved in oxidative DNA damage induced by ER stress and anticancer agents by activating LTC4 biosynthetic machinery in nonimmune cells. The protein is Microsomal glutathione S-transferase 2 (MGST2) of Bos taurus (Bovine).